The sequence spans 126 residues: Calcitonin receptor-stimulating peptide 1 (126 aa).

An N-terminal signal peptide occupies residues 1–25; the sequence is MGFWKFPPFLVLSILVLYQAGMFHT. The propeptide occupies 26 to 78; sequence APMRSAFGSPFDPATLSEEESRLLLAAMVNDYEQMKAREMQKQRAQGSGISVQ. Cys82 and Cys87 are oxidised to a cystine. Gly118 carries the post-translational modification Glycine amide. A propeptide spanning residues 123–126 is cleaved from the precursor; that stretch reads NFWI.

Mainly expressed in the thyroid gland and CNS. Found in the nerve cells of cerebrum, hippocampus, hypothalamus, pons/midbrain and thalamus.

It is found in the secreted. Functionally, stimulates cAMP production in porcine kidney cell line LLC-PK1 via the calcitonin receptor (CT) but not via the CT-like (CL) receptor. The chain is Calcitonin receptor-stimulating peptide 1 (CRSP1) from Sus scrofa (Pig).